The sequence spans 223 residues: MTTQDELKRIAAEKAVEFVPENEYIGIGTGSTINFFIEALGKSGKKIKGAVSTSKKSGELLARYDIPVVSLNEVSGLAVYIDGADEVNHALQMIKGGGGAHLNEKIVASASEKFVCIADESKYVSRLGKFPLPVEAVESARSLVSRKLLAMGGQPELRIGYTTFYGNQIVDVHGLNIDQPLTMEDEINKITGVLENGIFARDAADVLILGTEEGAKVIYPCQG.

Substrate is bound by residues Thr29 to Thr32, Asp82 to Asp85, and Lys95 to Gly98. Residue Glu104 is the Proton acceptor of the active site. Lys122 contacts substrate.

This sequence belongs to the ribose 5-phosphate isomerase family. Homodimer.

The enzyme catalyses aldehydo-D-ribose 5-phosphate = D-ribulose 5-phosphate. The protein operates within carbohydrate degradation; pentose phosphate pathway; D-ribose 5-phosphate from D-ribulose 5-phosphate (non-oxidative stage): step 1/1. In terms of biological role, catalyzes the reversible conversion of ribose-5-phosphate to ribulose 5-phosphate. This Neisseria gonorrhoeae (strain ATCC 700825 / FA 1090) protein is Ribose-5-phosphate isomerase A.